The chain runs to 431 residues: Serine hydroxymethyltransferase 2 (431 aa).

Residues Leu-131 and 135–137 each bind (6S)-5,6,7,8-tetrahydrofolate; that span reads GHL. Lys-240 carries the post-translational modification N6-(pyridoxal phosphate)lysine. Glu-256 contacts (6S)-5,6,7,8-tetrahydrofolate.

Belongs to the SHMT family. Homodimer. Pyridoxal 5'-phosphate serves as cofactor.

It is found in the cytoplasm. The enzyme catalyses (6R)-5,10-methylene-5,6,7,8-tetrahydrofolate + glycine + H2O = (6S)-5,6,7,8-tetrahydrofolate + L-serine. It functions in the pathway one-carbon metabolism; tetrahydrofolate interconversion. Its pathway is amino-acid biosynthesis; glycine biosynthesis; glycine from L-serine: step 1/1. In terms of biological role, catalyzes the reversible interconversion of serine and glycine with tetrahydrofolate (THF) serving as the one-carbon carrier. This reaction serves as the major source of one-carbon groups required for the biosynthesis of purines, thymidylate, methionine, and other important biomolecules. Also exhibits THF-independent aldolase activity toward beta-hydroxyamino acids, producing glycine and aldehydes, via a retro-aldol mechanism. The chain is Serine hydroxymethyltransferase 2 from Vibrio vulnificus (strain YJ016).